The primary structure comprises 194 residues: dITP/XTP pyrophosphatase (194 aa).

8 to 13 (TKNKGK) lines the substrate pocket. Residues E41 and D70 each contribute to the Mg(2+) site. D70 acts as the Proton acceptor in catalysis. Residues S71, 153–156 (FGYD), K176, and 181–182 (HR) each bind substrate.

The protein belongs to the HAM1 NTPase family. In terms of assembly, homodimer. Mg(2+) is required as a cofactor.

The catalysed reaction is XTP + H2O = XMP + diphosphate + H(+). It catalyses the reaction dITP + H2O = dIMP + diphosphate + H(+). The enzyme catalyses ITP + H2O = IMP + diphosphate + H(+). Functionally, pyrophosphatase that catalyzes the hydrolysis of nucleoside triphosphates to their monophosphate derivatives, with a high preference for the non-canonical purine nucleotides XTP (xanthosine triphosphate), dITP (deoxyinosine triphosphate) and ITP. Seems to function as a house-cleaning enzyme that removes non-canonical purine nucleotides from the nucleotide pool, thus preventing their incorporation into DNA/RNA and avoiding chromosomal lesions. The sequence is that of dITP/XTP pyrophosphatase from Halalkalibacterium halodurans (strain ATCC BAA-125 / DSM 18197 / FERM 7344 / JCM 9153 / C-125) (Bacillus halodurans).